The sequence spans 72 residues: Translation initiation factor IF-1 (72 aa).

Positions 1-72 (MAKEDVIEVE…NRGRIVYRYK (72 aa)) constitute an S1-like domain.

This sequence belongs to the IF-1 family. Component of the 30S ribosomal translation pre-initiation complex which assembles on the 30S ribosome in the order IF-2 and IF-3, IF-1 and N-formylmethionyl-tRNA(fMet); mRNA recruitment can occur at any time during PIC assembly.

The protein resides in the cytoplasm. One of the essential components for the initiation of protein synthesis. Stabilizes the binding of IF-2 and IF-3 on the 30S subunit to which N-formylmethionyl-tRNA(fMet) subsequently binds. Helps modulate mRNA selection, yielding the 30S pre-initiation complex (PIC). Upon addition of the 50S ribosomal subunit IF-1, IF-2 and IF-3 are released leaving the mature 70S translation initiation complex. The protein is Translation initiation factor IF-1 of Moorella thermoacetica (strain ATCC 39073 / JCM 9320).